The chain runs to 267 residues: uncharacterized protein (267 aa).

An ABC transporter domain is found at Leu17–Leu248. ATP is bound at residue Gly53–Thr60.

It belongs to the ABC transporter superfamily.

This is an uncharacterized protein from Methanocaldococcus jannaschii (strain ATCC 43067 / DSM 2661 / JAL-1 / JCM 10045 / NBRC 100440) (Methanococcus jannaschii).